Reading from the N-terminus, the 611-residue chain is Serine protease FAM111A (611 aa).

A PIP-box motif is present at residues 16–28; the sequence is KCNMKIEHYFSPV. K20 is covalently cross-linked (Glycyl lysine isopeptide (Lys-Gly) (interchain with G-Cter in SUMO2)). The residue at position 26 (S26) is a Phosphoserine. Residues K30 and K65 each participate in a glycyl lysine isopeptide (Lys-Gly) (interchain with G-Cter in SUMO2) cross-link. Residues 44-73 form a disordered region; sequence ESRGDPRATTNTQAQRFHSPKKNPEDQTMP. The segment at 336–611 is interaction with SV40 large T antigen; the sequence is KVTKNSSSIK…DVEMMSDEDL (276 aa). Catalysis depends on charge relay system residues H385, D439, and S541.

This sequence belongs to the FAM111 family. In terms of assembly, interacts (via PIP-box) with PCNA; then interaction is direct. As to quaternary structure, (Microbial infection) Interacts with SV40 virus large T antigen and this interaction is required for efficient viral replication and sustained viral gene expression in restrictive cell types. (Microbial infection) Interacts with vaccinia virus protein OPG079; this interaction promotes the degradation of OPG079. Autocatalytically cleaved; activating the protein. Autocatalytic cleavage takes place in trans.

Its subcellular location is the nucleus. It is found in the chromosome. The protein localises to the cytoplasm. In terms of biological role, single-stranded DNA-binding serine protease that mediates the proteolytic cleavage of covalent DNA-protein cross-links (DPCs) during DNA synthesis, thereby playing a key role in maintaining genomic integrity. DPCs are highly toxic DNA lesions that interfere with essential chromatin transactions, such as replication and transcription, and which are induced by reactive agents, such as UV light or formaldehyde. Protects replication fork from stalling by removing DPCs, such as covalently trapped topoisomerase 1 (TOP1) adducts on DNA lesion, or poly(ADP-ribose) polymerase 1 (PARP1)-DNA complexes trapped by PARP inhibitors. Required for PCNA loading on replication sites. Promotes S-phase entry and DNA synthesis. Also acts as a restriction factor for some viruses including SV40 polyomavirus and vaccinia virus. Mechanistically, affects nuclear barrier function during viral replication by mediating the disruption of the nuclear pore complex (NPC) via its protease activity. In turn, interacts with vaccinia virus DNA-binding protein OPG079 in the cytoplasm and promotes its degradation without the need of its protease activity but through autophagy. The sequence is that of Serine protease FAM111A from Homo sapiens (Human).